The sequence spans 228 residues: Dolichyl-phosphate hexose transferase HVO_1613 (228 aa).

It belongs to the glycosyltransferase 2 family.

Glycosyltransferase that adds a monosaccharide to dolichol phosphate, thereby being responsible for generating one of the three monosaccharide-modified dolichol phosphates. The subunit onto which additional sugars are added is not known. The protein is Dolichyl-phosphate hexose transferase HVO_1613 of Haloferax volcanii (strain ATCC 29605 / DSM 3757 / JCM 8879 / NBRC 14742 / NCIMB 2012 / VKM B-1768 / DS2) (Halobacterium volcanii).